Reading from the N-terminus, the 444-residue chain is C4-dicarboxylate transport protein 3 (444 aa).

9 helical membrane-spanning segments follow: residues 22–42 (VLYV…WLWP), 60–80 (LIKM…IAHI), 95–115 (VYFE…GNLV), 162–182 (GEIL…MSLG), 198–218 (AVFG…FGAM), 236–256 (LIAT…GIIA), 321–341 (IYMT…LSFG), 346–366 (ILVV…AGFI), and 399–419 (LTNL…EGEL).

It belongs to the dicarboxylate/amino acid:cation symporter (DAACS) (TC 2.A.23) family.

The protein localises to the cell inner membrane. Its function is as follows. Responsible for the transport of dicarboxylates such as succinate, fumarate, and malate from the periplasm across the membrane. This is C4-dicarboxylate transport protein 3 from Bradyrhizobium diazoefficiens (strain JCM 10833 / BCRC 13528 / IAM 13628 / NBRC 14792 / USDA 110).